Here is a 985-residue protein sequence, read N- to C-terminus: Disease resistance protein At4g27190 (985 aa).

Residues 24 to 88 adopt a coiled-coil conformation; that stretch reads ANAIKFKSNV…ISKARLKLEE (65 aa). Positions 167 to 429 constitute an NB-ARC domain; that stretch reads IGVWGMGGVG…MAEGFMEELG (263 aa). 171–178 lines the ATP pocket; it reads GMGGVGKT. LRR repeat units lie at residues 502–523, 526–547, 551–572, 575–597, 598–620, and 621–643; these read SLRR…VEEF, KTSV…GFLQ, TLRI…SLLR, SLHS…ETLA, KLEL…EELK, and RFRH…VVSR.

The protein belongs to the disease resistance NB-LRR family.

Functionally, disease resistance protein. This Arabidopsis thaliana (Mouse-ear cress) protein is Disease resistance protein At4g27190.